Here is a 238-residue protein sequence, read N- to C-terminus: Urease accessory protein UreF (238 aa).

It belongs to the UreF family. UreD, UreF and UreG form a complex that acts as a GTP-hydrolysis-dependent molecular chaperone, activating the urease apoprotein by helping to assemble the nickel containing metallocenter of UreC. The UreE protein probably delivers the nickel.

The protein resides in the cytoplasm. In terms of biological role, required for maturation of urease via the functional incorporation of the urease nickel metallocenter. The chain is Urease accessory protein UreF from Delftia acidovorans (strain DSM 14801 / SPH-1).